We begin with the raw amino-acid sequence, 1273 residues long: Protein sax-3 (1273 aa).

An N-terminal signal peptide occupies residues 1-23; sequence MFNRKTLLCTILLVLQAVIRSFC. Ig-like C2-type domains follow at residues 31–127, 133–222, 227–312, 317–411, and 425–511; these read PVII…GSLK, EDFR…ARLS, PKFE…AHLR, PSFQ…LKVT, and PTIE…ASLT. Cystine bridges form between C52-C110, C154-C205, C248-C296, C338-C393, and C446-C495. Fibronectin type-III domains follow at residues 533 to 628, 653 to 750, and 755 to 849; these read SPTQ…TSKP, QLIK…TAEA, and PPED…MNQD. A helical membrane pass occupies residues 874-894; the sequence is VPVIVIVAILIIFVVIIIAYC. A disordered region spans residues 1033 to 1273; sequence APAMPTNPVP…NNGIVTQEQT (241 aa). Pro residues predominate over residues 1037-1046; the sequence is PTNPVPPEPP. Polar residues predominate over residues 1096–1105; it reads QLHSSDGTGS. Over residues 1106–1115 the composition is skewed to basic and acidic residues; that stretch reads SKERTGERRT. Residues 1125–1136 are compositionally biased toward pro residues; that stretch reads IPPPPSNPPPPG. Over residues 1145 to 1156 the composition is skewed to polar residues; that stretch reads QTATRRQLNRGS. Acidic residues predominate over residues 1207-1222; it reads MDDDGGSSEADGENSE. Positions 1240-1273 are enriched in polar residues; it reads SASTLAHSCYGTNGTAQRFRSIPRNNGIVTQEQT.

The protein belongs to the immunoglobulin superfamily. ROBO/SAX3 family. In terms of tissue distribution, expressed in the AVG interneuron and the male-specific sensory neuron HOA.

Its subcellular location is the membrane. Its function is as follows. Required to confine migrating sex myoblasts to the ventral muscle quadrants during their migration through the body and for multiple aspects of sensory, motor, and interneuron axon guidance. The protein is Protein sax-3 of Caenorhabditis elegans.